A 319-amino-acid chain; its full sequence is Melanoma-associated antigen B2 (319 aa).

Basic residues predominate over residues 1-17 (MPRGQKSKLRAREKRRK). Residues 1 to 112 (MPRGQKSKLR…TKSPSEDPLT (112 aa)) are disordered. Low complexity-rich tracts occupy residues 39-57 (PCCS…PAAG), 67-79 (TTAA…VSST), and 94-105 (ASSSQASTSTKS). Residues Ser77 and Ser105 each carry the phosphoserine modification. Residues 111–310 (LTRKSGSLVQ…CAFPTHYEEA (200 aa)) enclose the MAGE domain.

In terms of assembly, interacts with TRIM28. In terms of tissue distribution, expressed in testis and placenta, and in a significant fraction of tumors of various histologic types.

In terms of biological role, may enhance ubiquitin ligase activity of RING-type zinc finger-containing E3 ubiquitin-protein ligases. Proposed to act through recruitment and/or stabilization of the Ubl-conjugating enzyme (E2) at the E3:substrate complex. The sequence is that of Melanoma-associated antigen B2 (MAGEB2) from Homo sapiens (Human).